The primary structure comprises 445 residues: tRNA-2-methylthio-N(6)-dimethylallyladenosine synthase (445 aa).

The MTTase N-terminal domain occupies 13–129 (KKLFIKTYGC…LPAMARAGRG (117 aa)). Residues cysteine 22, cysteine 58, cysteine 92, cysteine 163, cysteine 167, and cysteine 170 each contribute to the [4Fe-4S] cluster site. In terms of domain architecture, Radical SAM core spans 149 to 383 (TRRAPAAFLT…LTSQQKAAQE (235 aa)). One can recognise a TRAM domain in the interval 383–445 (EGMVGRELGV…PNSLAGVLAA (63 aa)).

This sequence belongs to the methylthiotransferase family. MiaB subfamily. Monomer. The cofactor is [4Fe-4S] cluster.

Its subcellular location is the cytoplasm. It catalyses the reaction N(6)-dimethylallyladenosine(37) in tRNA + (sulfur carrier)-SH + AH2 + 2 S-adenosyl-L-methionine = 2-methylsulfanyl-N(6)-dimethylallyladenosine(37) in tRNA + (sulfur carrier)-H + 5'-deoxyadenosine + L-methionine + A + S-adenosyl-L-homocysteine + 2 H(+). Functionally, catalyzes the methylthiolation of N6-(dimethylallyl)adenosine (i(6)A), leading to the formation of 2-methylthio-N6-(dimethylallyl)adenosine (ms(2)i(6)A) at position 37 in tRNAs that read codons beginning with uridine. This Paracoccus denitrificans (strain Pd 1222) protein is tRNA-2-methylthio-N(6)-dimethylallyladenosine synthase.